Here is a 367-residue protein sequence, read N- to C-terminus: Germination protease (367 aa).

Residues 1–15 (MKEPLDLSKYSVRTD) constitute a propeptide that is removed on maturation.

It belongs to the peptidase A25 family. As to quaternary structure, homotetramer. Post-translationally, autoproteolytically processed. The inactive tetrameric zymogen termed p46 autoprocesses to a smaller form termed p41, which is active only during spore germination.

It carries out the reaction Endopeptidase action with P4 Glu or Asp, P1 preferably Glu &gt; Asp, P1' hydrophobic and P2' Ala.. Functionally, initiates the rapid degradation of small, acid-soluble proteins during spore germination. This is Germination protease from Bacillus cereus (strain G9842).